Reading from the N-terminus, the 130-residue chain is Small ribosomal subunit protein uS11 (130 aa).

Belongs to the universal ribosomal protein uS11 family. Part of the 30S ribosomal subunit. Interacts with proteins S7 and S18. Binds to IF-3.

In terms of biological role, located on the platform of the 30S subunit, it bridges several disparate RNA helices of the 16S rRNA. Forms part of the Shine-Dalgarno cleft in the 70S ribosome. This chain is Small ribosomal subunit protein uS11, found in Ruegeria pomeroyi (strain ATCC 700808 / DSM 15171 / DSS-3) (Silicibacter pomeroyi).